We begin with the raw amino-acid sequence, 122 residues long: MIQMQSVLDVADNTGARSVMCIKVLGGSHRRYAGVGDIIKVSIKDAAPRGRVKKGDVYNAVVVRTAKGVRRPDGSLVRFDGNAAVLLNNKLEPIGTRIFGPVTRELRTEKFMKIVSLAPEVL.

It belongs to the universal ribosomal protein uL14 family. In terms of assembly, part of the 50S ribosomal subunit. Forms a cluster with proteins L3 and L19. In the 70S ribosome, L14 and L19 interact and together make contacts with the 16S rRNA in bridges B5 and B8.

Its function is as follows. Binds to 23S rRNA. Forms part of two intersubunit bridges in the 70S ribosome. The polypeptide is Large ribosomal subunit protein uL14 (Thiobacillus denitrificans (strain ATCC 25259 / T1)).